The following is a 138-amino-acid chain: Histone H2B (138 aa).

The span at 1 to 10 shows a compositional bias: basic and acidic residues; it reads MPPKAAEKKP. Residues 1–47 are disordered; the sequence is MPPKAAEKKPSTAGKAPAGKAPEKKEAGKKTTAAGGEKKKRSKTRKE. Lysine 8 and lysine 9 each carry N6-acetyllysine; alternate. Glycyl lysine isopeptide (Lys-Gly) (interchain with G-Cter in SUMO); alternate cross-links involve residues lysine 8 and lysine 9. A compositionally biased stretch (low complexity) spans 11 to 20; it reads STAGKAPAGK. An N6-acetyllysine modification is found at lysine 15. The residue at position 24 (lysine 24) is an N6-acetyllysine; alternate. Residue lysine 24 forms a Glycyl lysine isopeptide (Lys-Gly) (interchain with G-Cter in SUMO); alternate linkage. Lysine 25 is covalently cross-linked (Glycyl lysine isopeptide (Lys-Gly) (interchain with G-Cter in SUMO)). Lysine 132 participates in a covalent cross-link: Glycyl lysine isopeptide (Lys-Gly) (interchain with G-Cter in ubiquitin).

This sequence belongs to the histone H2B family. As to quaternary structure, the nucleosome is a histone octamer containing two molecules each of H2A, H2B, H3 and H4 assembled in one H3-H4 heterotetramer and two H2A-H2B heterodimers. The octamer wraps approximately 147 bp of DNA. In terms of processing, monoubiquitinated to form H2BK123ub1. H2BK123ub1 gives a specific tag for epigenetic transcriptional activation and is also prerequisite for H3K4me and H3K79me formation. H2BK123ub1 also modulates the formation of double-strand breaks during meiosis and is a prerequisite for DNA-damage checkpoint activation. Post-translationally, acetylated by GCN5 to form H2BK11ac and H2BK16ac. H2BK16ac can also be formed by ESA1. Acetylation of N-terminal lysines and particularly formation of H2BK11acK16ac has a positive effect on transcription. Sumoylation to form H2BK6su or H2BK7su, and probably also H2BK16su or H2BK17su, occurs preferentially near the telomeres and represses gene transcription.

Its subcellular location is the nucleus. The protein localises to the chromosome. In terms of biological role, core component of nucleosome. Nucleosomes wrap and compact DNA into chromatin, limiting DNA accessibility to the cellular machineries which require DNA as a template. Histones thereby play a central role in transcription regulation, DNA repair, DNA replication and chromosomal stability. DNA accessibility is regulated via a complex set of post-translational modifications of histones, also called histone code, and nucleosome remodeling. The sequence is that of Histone H2B (HTB1) from Ajellomyces capsulatus (Darling's disease fungus).